Here is a 349-residue protein sequence, read N- to C-terminus: Probable protease SohB (349 aa).

Over 1 to 8 the chain is Periplasmic; that stretch reads MELLSEYG. Residues 9–29 traverse the membrane as a helical segment; it reads LFLAKIVTVVLAIAAIAAIIV. Residues 30–349 lie on the Cytoplasmic side of the membrane; the sequence is NVAQRNKRQR…WWQRGQKPLM (320 aa). Ser-178 (nucleophile) is an active-site residue. The active-site Proton donor/acceptor is the Lys-230.

Belongs to the peptidase S49 family.

It is found in the cell inner membrane. Its function is as follows. Multicopy suppressor of the HtrA (DegP) null phenotype. It is possibly a protease, not essential for bacterial viability. This Escherichia coli (strain K12) protein is Probable protease SohB (sohB).